The primary structure comprises 591 residues: 2-succinyl-5-enolpyruvyl-6-hydroxy-3-cyclohexene-1-carboxylate synthase (591 aa).

It belongs to the TPP enzyme family. MenD subfamily. Homodimer. It depends on Mg(2+) as a cofactor. The cofactor is Mn(2+). Requires thiamine diphosphate as cofactor.

It catalyses the reaction isochorismate + 2-oxoglutarate + H(+) = 5-enolpyruvoyl-6-hydroxy-2-succinyl-cyclohex-3-ene-1-carboxylate + CO2. It functions in the pathway quinol/quinone metabolism; 1,4-dihydroxy-2-naphthoate biosynthesis; 1,4-dihydroxy-2-naphthoate from chorismate: step 2/7. Its pathway is cofactor biosynthesis; phylloquinone biosynthesis. Its function is as follows. Catalyzes the thiamine diphosphate-dependent decarboxylation of 2-oxoglutarate and the subsequent addition of the resulting succinic semialdehyde-thiamine pyrophosphate anion to isochorismate to yield 2-succinyl-5-enolpyruvyl-6-hydroxy-3-cyclohexene-1-carboxylate (SEPHCHC). This is 2-succinyl-5-enolpyruvyl-6-hydroxy-3-cyclohexene-1-carboxylate synthase from Rippkaea orientalis (strain PCC 8801 / RF-1) (Cyanothece sp. (strain PCC 8801)).